The chain runs to 440 residues: Virion host shutoff protein (440 aa).

2 disordered regions span residues 98–144 (NIDH…RRKT) and 265–312 (IDEP…AGPG). Residues 266 to 281 (DEPPAASEESSASDQQ) show a composition bias toward low complexity.

Belongs to the herpesviridae VHS protein family.

The protein resides in the virion. Functionally, minor structural protein that acts as an endoribonuclease during lytic infection. Degrades host mRNAs in the cytoplasm by cutting them at preferred sites, including some in regions of translation initiation. The chain is Virion host shutoff protein (UL41) from Amazona oratrix (yellow-headed parrot).